The following is a 144-amino-acid chain: UPF0102 protein BPSL3274 (144 aa).

A disordered region spans residues 1 to 28 (MCHAREASPGTGEPEAAPRDNFPREAGS). Residues 16-28 (AAPRDNFPREAGS) are compositionally biased toward basic and acidic residues.

It belongs to the UPF0102 family.

This is UPF0102 protein BPSL3274 from Burkholderia pseudomallei (strain K96243).